The following is a 413-amino-acid chain: Aspartate aminotransferase, cytoplasmic (413 aa).

Positions 39 and 141 each coordinate L-aspartate. Position 149 is a phosphoserine (Ser-149). Asn-195 provides a ligand contact to L-aspartate. Lys-259 is modified (N6-(pyridoxal phosphate)lysine). Residue Arg-387 participates in L-aspartate binding.

It belongs to the class-I pyridoxal-phosphate-dependent aminotransferase family. Homodimer. Pyridoxal 5'-phosphate serves as cofactor.

Its subcellular location is the cytoplasm. It carries out the reaction L-aspartate + 2-oxoglutarate = oxaloacetate + L-glutamate. It catalyses the reaction L-cysteine + 2-oxoglutarate = 2-oxo-3-sulfanylpropanoate + L-glutamate. The catalysed reaction is (2S)-2-aminobutanoate + 2-oxoglutarate = 2-oxobutanoate + L-glutamate. The enzyme catalyses 3-sulfino-L-alanine + 2-oxoglutarate = 3-sulfinopyruvate + L-glutamate. Functionally, biosynthesis of L-glutamate from L-aspartate or L-cysteine. Important regulator of levels of glutamate, the major excitatory neurotransmitter of the vertebrate central nervous system. Acts as a scavenger of glutamate in brain neuroprotection. The aspartate aminotransferase activity is involved in hepatic glucose synthesis during development and in adipocyte glyceroneogenesis. Using L-cysteine as substrate, regulates levels of mercaptopyruvate, an important source of hydrogen sulfide. Mercaptopyruvate is converted into H(2)S via the action of 3-mercaptopyruvate sulfurtransferase (3MST). Hydrogen sulfide is an important synaptic modulator and neuroprotectant in the brain. In Pan troglodytes (Chimpanzee), this protein is Aspartate aminotransferase, cytoplasmic.